Consider the following 1220-residue polypeptide: Deubiquitinating protein VCPIP1 (1220 aa).

Residues 1 to 19 (MSQPPPPPPLPPPPPPPEA) show a composition bias toward pro residues. The segment at 1–40 (MSQPPPPPPLPPPPPPPEAPQTSSSLAAAASPGGLSKRRD) is disordered. Low complexity predominate over residues 20-35 (PQTSSSLAAAASPGGL). One can recognise an OTU domain in the interval 207–360 (LIPVHVDGDG…RNHYIPLVGI (154 aa)). Asp-215 is a catalytic residue. The active-site Nucleophile is the Cys-218. Residue His-353 is part of the active site. Lys-407 bears the N6-acetyllysine mark. 2 disordered regions span residues 724 to 778 (SVMQ…KIRI) and 988 to 1008 (EATT…LGSG). A phosphoserine mark is found at Ser-746 and Ser-756. A compositionally biased stretch (low complexity) spans 754–770 (PSSAPATPTKAPYSPTT). The residue at position 762 (Thr-762) is a Phosphothreonine. Phosphoserine is present on residues Ser-767, Ser-993, Ser-997, and Ser-1076. 2 disordered regions span residues 1113–1140 (SSIQ…QRKV) and 1185–1220 (FATR…MDHS). A phosphoserine mark is found at Ser-1196 and Ser-1205. Acidic residues predominate over residues 1197–1207 (MEEPEEMDSQD). Residues 1208-1220 (AETTNTTEPMDHS) are compositionally biased toward polar residues.

As to quaternary structure, binds VCP and the ternary complex containing STX5A, NSFL1C and VCP. Post-translationally, phosphorylated at Ser-1205 by ATM or ATR following induction of covalent DNA-protein cross-links (DPCs).

It is found in the nucleus. The protein localises to the cytoplasm. The protein resides in the endoplasmic reticulum. It localises to the golgi apparatus. Its subcellular location is the golgi stack. The catalysed reaction is Thiol-dependent hydrolysis of ester, thioester, amide, peptide and isopeptide bonds formed by the C-terminal Gly of ubiquitin (a 76-residue protein attached to proteins as an intracellular targeting signal).. Deubiquitinating enzyme involved in DNA repair and reassembly of the Golgi apparatus and the endoplasmic reticulum following mitosis. Necessary for VCP-mediated reassembly of Golgi stacks after mitosis. Plays a role in VCP-mediated formation of transitional endoplasmic reticulum (tER). Mediates dissociation of the ternary complex containing STX5A, NSFL1C and VCP. Also involved in DNA repair following phosphorylation by ATM or ATR: acts by catalyzing deubiquitination of SPRTN, thereby promoting SPRTN recruitment to chromatin and subsequent proteolytic cleavage of covalent DNA-protein cross-links (DPCs). Hydrolyzes 'Lys-11'- and 'Lys-48'-linked polyubiquitin chains. In Mus musculus (Mouse), this protein is Deubiquitinating protein VCPIP1.